The chain runs to 204 residues: Urease accessory protein UreG (204 aa).

11-18 (GPVGAGKT) lines the GTP pocket.

The protein belongs to the SIMIBI class G3E GTPase family. UreG subfamily. Homodimer. UreD, UreF and UreG form a complex that acts as a GTP-hydrolysis-dependent molecular chaperone, activating the urease apoprotein by helping to assemble the nickel containing metallocenter of UreC. The UreE protein probably delivers the nickel.

The protein resides in the cytoplasm. Facilitates the functional incorporation of the urease nickel metallocenter. This process requires GTP hydrolysis, probably effectuated by UreG. This Staphylococcus epidermidis (strain ATCC 12228 / FDA PCI 1200) protein is Urease accessory protein UreG.